The primary structure comprises 77 residues: Omega-conotoxin TxVII (77 aa).

The first 22 residues, 1–22 (MKLTCMMIVAVLFLTAWTFATA), serve as a signal peptide directing secretion. Positions 23 to 49 (DDSGNGLENLFPKAHHEMKNPEASKLN) are excised as a propeptide. Intrachain disulfides connect Cys52/Cys67, Cys59/Cys71, and Cys66/Cys75.

In terms of tissue distribution, expressed by the venom duct.

Its subcellular location is the secreted. Functionally, omega-conotoxins act at presynaptic membranes, they bind and block voltage-gated calcium channels (Cav). Specifically acts on L-type channels. It blocks molluscan dihydropyridine-sensitive calcium channels. The chain is Omega-conotoxin TxVII from Conus textile (Cloth-of-gold cone).